We begin with the raw amino-acid sequence, 1072 residues long: Guanylyl cyclase C (1072 aa).

The first 22 residues, 1-22 (MTSLLGLAVRLLLFQPTLMFWA), serve as a signal peptide directing secretion. At 23 to 429 (SQVRQKCHNG…PNDVPGLGPQ (407 aa)) the chain is on the extracellular side. N-linked (GlcNAc...) asparagine glycosylation is found at Asn-31, Asn-74, Asn-78, Asn-187, Asn-194, Asn-306, and Asn-401. A helical membrane pass occupies residues 430 to 453 (ILMIAVFTLTGIVVVLLLIALLVL). Residues 454–1072 (RKYRRDHELR…NNSDHDSTYF (619 aa)) are Cytoplasmic-facing. Positions 488 to 748 (LKIDDDRRRD…KIESTLAKIF (261 aa)) constitute a Protein kinase domain. The 131-residue stretch at 823–953 (TIYFSDIVGF…DTVNTASRME (131 aa)) folds into the Guanylate cyclase domain.

It belongs to the adenylyl cyclase class-4/guanylyl cyclase family. Homotrimer. Interacts via its C-terminal region with PDZK2. Interacts with the lectin chaperone VIP36. In terms of processing, glycosylation at Asn-74 and/or Asn-78 is required for interaction with VIP36 while glycosylation at Asn-401 modulates ligand-mediated GC-C activation.

It localises to the cell membrane. The protein localises to the endoplasmic reticulum membrane. It catalyses the reaction GTP = 3',5'-cyclic GMP + diphosphate. In terms of biological role, guanylyl cyclase that catalyzes synthesis of cyclic GMP (cGMP) from GTP. Receptor for the E.coli heat-stable enterotoxin; E.coli enterotoxin markedly stimulates the accumulation of cGMP in mammalian cells expressing GUCY2C. This Rattus norvegicus (Rat) protein is Guanylyl cyclase C (Gucy2c).